Reading from the N-terminus, the 483-residue chain is MKILFTASEAWPLVKTGGLGDVAHGLTHALRERRHDVRLLLPAHPDAVAGLEGRIRRHALTLDQRPFTLIEGRLPGTRVTTWLLDDPPLFARAGNPYTTEDGDPWPDNARRYHRLSRVAAALAAGELLPWQAAVLHAHDWQTALAPFLLQRRPVPRPATVFTIHNLAYRGLFPAETHTRLGLPPEAWTPEGLEFHGRLAFIKGGLAYADAITTVSPTYAREIQTPAFGCGLDGLLRHRSGVLHGIVNGIDTTVWNPAADPHLAACYRKPDPAARAANRAALAQRIGLDGDTGERSGPLLGFVGRLVEQKGVDLILAALPRLLAGGARLALLGSGERELEEALRQAARHYPGRVGVHIGYDEGLAHLIEGGCDLFLMPSRFEPCGLNQLYSLRYGTPPVVTATGGLADTVMDVDTDPTAGNGFHLPAANAGALAATVERATAHWRRPAAWKRIQARGMGGDYSWDASAEAYLRLYRNTPGNNGS.

An ADP-alpha-D-glucose-binding site is contributed by Lys15.

It belongs to the glycosyltransferase 1 family. Bacterial/plant glycogen synthase subfamily.

The enzyme catalyses [(1-&gt;4)-alpha-D-glucosyl](n) + ADP-alpha-D-glucose = [(1-&gt;4)-alpha-D-glucosyl](n+1) + ADP + H(+). The protein operates within glycan biosynthesis; glycogen biosynthesis. Its function is as follows. Synthesizes alpha-1,4-glucan chains using ADP-glucose. This Alkalilimnicola ehrlichii (strain ATCC BAA-1101 / DSM 17681 / MLHE-1) protein is Glycogen synthase.